The primary structure comprises 221 residues: Charged multivesicular body protein 3 (221 aa).

Gly-2 carries N-myristoyl glycine lipidation. Residues 22-54 (KIRKEMRVIDRQIRDIQREEEKVKRSIKDAAKK) adopt a coiled-coil conformation. 2 important for autoinhibitory function regions span residues 59–64 (VCIILA) and 168–169 (IL). A coiled-coil region spans residues 144 to 221 (LEDTLEGMDD…MQSRLAALRS (78 aa)). The disordered stretch occupies residues 181–221 (PSKVTDLPDPVAIGATAAPEEESEEEEEIEEMQSRLAALRS). A compositionally biased stretch (acidic residues) spans 199 to 211 (PEEESEEEEEIEE). Positions 200 to 210 (EEESEEEEEIE) match the MIT-interacting motif motif. 2 interaction with STAMBP regions span residues 202 to 206 (ESEEE) and 220 to 221 (RS).

This sequence belongs to the SNF7 family. Probable core component of the endosomal sorting required for transport complex III (ESCRT-III). ESCRT-III components are thought to multimerize to form a flat lattice on the perimeter membrane of the endosome. Several assembly forms of ESCRT-III may exist that interact and act sequentially.

It localises to the cytoplasm. The protein resides in the cytosol. The protein localises to the membrane. Its subcellular location is the endosome. It is found in the late endosome membrane. Its function is as follows. Probable core component of the endosomal sorting required for transport complex III (ESCRT-III) which is involved in multivesicular bodies (MVBs) formation and sorting of endosomal cargo proteins into MVBs. MVBs contain intraluminal vesicles (ILVs) that are generated by invagination and scission from the limiting membrane of the endosome and mostly are delivered to lysosomes enabling degradation of membrane proteins, such as stimulated growth factor receptors, lysosomal enzymes and lipids. Involved in late stages of cytokinesis. Plays a role in endosomal sorting/trafficking of EGF receptor. The protein is Charged multivesicular body protein 3 (chmp3) of Danio rerio (Zebrafish).